Reading from the N-terminus, the 401-residue chain is L-rhamnonate dehydratase (401 aa).

Substrate is bound by residues His-29 and Arg-55. Residues Asp-222, Glu-248, and Glu-276 each coordinate Mg(2+). Residue His-325 is the Proton acceptor of the active site. Glu-345 provides a ligand contact to substrate.

This sequence belongs to the mandelate racemase/muconate lactonizing enzyme family. RhamD subfamily. In terms of assembly, homooctamer; tetramer of dimers. Mg(2+) serves as cofactor.

It carries out the reaction L-rhamnonate = 2-dehydro-3-deoxy-L-rhamnonate + H2O. Its function is as follows. Catalyzes the dehydration of L-rhamnonate to 2-keto-3-deoxy-L-rhamnonate (KDR). Can also dehydrate L-lyxonate, L-mannonate and D-gulonate, although less efficiently, but not 2-keto-4-hydroxyheptane-1,7-dioate. In Escherichia coli (strain K12), this protein is L-rhamnonate dehydratase (rhmD).